Consider the following 537-residue polypeptide: tRNA(His) guanylyltransferase 2 (537 aa).

D307, G308, and D354 together coordinate Mg(2+). GTP is bound by residues 307–312 (DGCHFH) and 353–354 (SD).

The protein belongs to the tRNA(His) guanylyltransferase family. It depends on Mg(2+) as a cofactor.

Its subcellular location is the nucleus. It localises to the nucleoplasm. It catalyses the reaction a 5'-end ribonucleotide-tRNA(His) + GTP + ATP + H2O = a 5'-end phospho-guanosine-ribonucleotide-tRNA(His) + AMP + 2 diphosphate + H(+). Its function is as follows. Adds a GMP to the 5'-end of tRNA(His) after transcription and RNase P cleavage. This chain is tRNA(His) guanylyltransferase 2 (THG2), found in Arabidopsis thaliana (Mouse-ear cress).